Consider the following 20-residue polypeptide: XYNLLTIEDIDVKGKRVLVR.

The protein belongs to the phosphoglycerate kinase family. As to quaternary structure, monomer.

It localises to the cytoplasm. The enzyme catalyses (2R)-3-phosphoglycerate + ATP = (2R)-3-phospho-glyceroyl phosphate + ADP. The protein operates within carbohydrate degradation; glycolysis; pyruvate from D-glyceraldehyde 3-phosphate: step 2/5. The polypeptide is Putative phosphoglycerate kinase (pgk) (Clostridium pasteurianum).